Consider the following 283-residue polypeptide: Pantothenate synthetase (283 aa).

Position 30–37 (30–37 (MGNLHDGH)) interacts with ATP. The active-site Proton donor is the histidine 37. Residue glutamine 61 coordinates (R)-pantoate. Glutamine 61 serves as a coordination point for beta-alanine. 149–152 (GEKD) contacts ATP. Glutamine 155 is a (R)-pantoate binding site. An ATP-binding site is contributed by 186–189 (LSSR).

It belongs to the pantothenate synthetase family. Homodimer.

The protein resides in the cytoplasm. It catalyses the reaction (R)-pantoate + beta-alanine + ATP = (R)-pantothenate + AMP + diphosphate + H(+). Its pathway is cofactor biosynthesis; (R)-pantothenate biosynthesis; (R)-pantothenate from (R)-pantoate and beta-alanine: step 1/1. Catalyzes the condensation of pantoate with beta-alanine in an ATP-dependent reaction via a pantoyl-adenylate intermediate. This Shigella dysenteriae serotype 1 (strain Sd197) protein is Pantothenate synthetase.